A 279-amino-acid chain; its full sequence is Acetyl-coenzyme A carboxylase carboxyl transferase subunit beta (279 aa).

Residues 23-279 (LWWKCEECGA…LTTLLSLMKL (257 aa)) form the CoA carboxyltransferase N-terminal domain. Zn(2+) is bound by residues cysteine 27, cysteine 30, cysteine 46, and cysteine 49. Residues 27 to 49 (CEECGAALHKKQMEASDHTCPQC) form a C4-type zinc finger.

It belongs to the AccD/PCCB family. In terms of assembly, acetyl-CoA carboxylase is a heterohexamer composed of biotin carboxyl carrier protein (AccB), biotin carboxylase (AccC) and two subunits each of ACCase subunit alpha (AccA) and ACCase subunit beta (AccD). Zn(2+) is required as a cofactor.

It localises to the cytoplasm. It catalyses the reaction N(6)-carboxybiotinyl-L-lysyl-[protein] + acetyl-CoA = N(6)-biotinyl-L-lysyl-[protein] + malonyl-CoA. It participates in lipid metabolism; malonyl-CoA biosynthesis; malonyl-CoA from acetyl-CoA: step 1/1. Component of the acetyl coenzyme A carboxylase (ACC) complex. Biotin carboxylase (BC) catalyzes the carboxylation of biotin on its carrier protein (BCCP) and then the CO(2) group is transferred by the transcarboxylase to acetyl-CoA to form malonyl-CoA. This Chlorobium chlorochromatii (strain CaD3) protein is Acetyl-coenzyme A carboxylase carboxyl transferase subunit beta.